Here is a 386-residue protein sequence, read N- to C-terminus: Succinate--CoA ligase [ADP-forming] subunit beta (386 aa).

An ATP-grasp domain is found at 9–244 (KEIFRKYGVP…LAEEEPREIQ (236 aa)). Residues Lys-46, 53-55 (GRG), Glu-99, Leu-102, and Glu-107 contribute to the ATP site. Asn-199 and Asp-213 together coordinate Mg(2+). Substrate is bound by residues Asn-264 and 321–323 (GIM).

It belongs to the succinate/malate CoA ligase beta subunit family. As to quaternary structure, heterotetramer of two alpha and two beta subunits. It depends on Mg(2+) as a cofactor.

The catalysed reaction is succinate + ATP + CoA = succinyl-CoA + ADP + phosphate. It carries out the reaction GTP + succinate + CoA = succinyl-CoA + GDP + phosphate. It functions in the pathway carbohydrate metabolism; tricarboxylic acid cycle; succinate from succinyl-CoA (ligase route): step 1/1. Its function is as follows. Succinyl-CoA synthetase functions in the citric acid cycle (TCA), coupling the hydrolysis of succinyl-CoA to the synthesis of either ATP or GTP and thus represents the only step of substrate-level phosphorylation in the TCA. The beta subunit provides nucleotide specificity of the enzyme and binds the substrate succinate, while the binding sites for coenzyme A and phosphate are found in the alpha subunit. The sequence is that of Succinate--CoA ligase [ADP-forming] subunit beta from Myxococcus xanthus (strain DK1622).